The primary structure comprises 127 residues: Biogenesis of lysosome-related organelles complex 1 subunit 2 (127 aa).

This sequence belongs to the BLOC1S2 family. In terms of assembly, component of the biogenesis of lysosome-related organelles complex-1 (BLOC-1). Interacts with BLOS1 and SNX1.

The protein localises to the cytoplasm. The protein resides in the endosome. Component of the biogenesis of lysosome-related organelles complex-1 (BLOC-1), a complex that mediates the vacuolar degradative transport via the intracellular vesicle trafficking from the endosome to the vacuole. The polypeptide is Biogenesis of lysosome-related organelles complex 1 subunit 2 (BLOS2) (Arabidopsis thaliana (Mouse-ear cress)).